The sequence spans 414 residues: Mini-circle putative transposase for IS117 (414 aa).

This chain is Mini-circle putative transposase for IS117, found in Streptomyces coelicolor (strain ATCC BAA-471 / A3(2) / M145).